Consider the following 1094-residue polypeptide: Transport and Golgi organization protein 6 homolog (1094 aa).

The chain crosses the membrane as a helical span at residues 468–488; the sequence is LTVLMDSLLPVLGVLFLLYCF. The residue at position 556 (Ser556) is a Phosphoserine. Residues 777–795 show a composition bias toward basic and acidic residues; that stretch reads EEQQQTSHERPTDVAHSHL. The tract at residues 777–834 is disordered; it reads EEQQQTSHERPTDVAHSHLEQQQSHETAPQTGLQSNAPIIPQGVNEPSTTTSQKSGSV. 2 stretches are compositionally biased toward polar residues: residues 796–813 and 821–834; these read EQQQSHETAPQTGLQSNA and NEPSTTTSQKSGSV. HEAT repeat units lie at residues 873–909 and 952–988; these read LEMQEKLLKIFLENLEHEDTFVYLSAIQGVALLSDVY and SKYREPLIHTFLRGVRDPDGAHRASSLANLGELCQRL.

Belongs to the Tango6 family.

Its subcellular location is the membrane. This Homo sapiens (Human) protein is Transport and Golgi organization protein 6 homolog (TANGO6).